A 222-amino-acid chain; its full sequence is MSGEDVPHRAESSEARAAAVSDIQDLMRRKEEIEAEIKANYDVLESQKGIGMNEPLVDCEGYPRADVDLYQVRTARHNIICLQNDHKALMKQVEEALHQLHARDKEKQARDMAEAREEAMNRRLASNSPVLPQAFARVNSISPGSPASIAGLQVDDEIVEFGSVNTQNFQSVQNVGTVVQHSEGKPLNVTVIRRGEKHQLRLIPTRWAGKGLLGCNIIPLQR.

The region spanning 108–194 (QARDMAEARE…KPLNVTVIRR (87 aa)) is the PDZ domain. Ser128 is subject to Phosphoserine.

The protein belongs to the proteasome subunit p27 family. In terms of assembly, interacts with PSMC3. Part of a transient complex (modulator) containing PSMD9, PSMC6 and PSMC3 formed during the assembly of the 26S proteasome.

Its function is as follows. Acts as a chaperone during the assembly of the 26S proteasome, specifically of the base subcomplex of the PA700/19S regulatory complex (RC). During the base subcomplex assembly is part of an intermediate PSMD9:PSMC6:PSMC3 module, also known as modulator trimer complex; PSMD9 is released during the further base assembly process. The polypeptide is 26S proteasome non-ATPase regulatory subunit 9 (Psmd9) (Mus musculus (Mouse)).